The chain runs to 451 residues: Bifunctional protein GlmU (451 aa).

The segment at 1–225 is pyrophosphorylase; sequence MVVVAILAAG…YQEILGINDR (225 aa). Residues 7–10, lysine 21, glutamine 72, and 77–78 contribute to the UDP-N-acetyl-alpha-D-glucosamine site; these read LAAG and GT. Aspartate 102 is a binding site for Mg(2+). The UDP-N-acetyl-alpha-D-glucosamine site is built by glycine 139, glutamate 154, asparagine 169, and asparagine 223. Asparagine 223 contacts Mg(2+). The tract at residues 226-246 is linker; it reads LQLATAYEILQRRVKEQWMMA. The segment at 247 to 451 is N-acetyltransferase; that stretch reads GVTLIDPNSI…LGWRRKSGES (205 aa). The UDP-N-acetyl-alpha-D-glucosamine site is built by arginine 328 and lysine 346. Histidine 358 (proton acceptor) is an active-site residue. Residues tyrosine 361 and asparagine 372 each coordinate UDP-N-acetyl-alpha-D-glucosamine. Acetyl-CoA-binding positions include alanine 375, 381–382, serine 400, alanine 418, and arginine 435; that span reads NY.

This sequence in the N-terminal section; belongs to the N-acetylglucosamine-1-phosphate uridyltransferase family. In the C-terminal section; belongs to the transferase hexapeptide repeat family. As to quaternary structure, homotrimer. Requires Mg(2+) as cofactor.

It localises to the cytoplasm. The enzyme catalyses alpha-D-glucosamine 1-phosphate + acetyl-CoA = N-acetyl-alpha-D-glucosamine 1-phosphate + CoA + H(+). It catalyses the reaction N-acetyl-alpha-D-glucosamine 1-phosphate + UTP + H(+) = UDP-N-acetyl-alpha-D-glucosamine + diphosphate. It participates in nucleotide-sugar biosynthesis; UDP-N-acetyl-alpha-D-glucosamine biosynthesis; N-acetyl-alpha-D-glucosamine 1-phosphate from alpha-D-glucosamine 6-phosphate (route II): step 2/2. The protein operates within nucleotide-sugar biosynthesis; UDP-N-acetyl-alpha-D-glucosamine biosynthesis; UDP-N-acetyl-alpha-D-glucosamine from N-acetyl-alpha-D-glucosamine 1-phosphate: step 1/1. Its pathway is bacterial outer membrane biogenesis; LPS lipid A biosynthesis. Its function is as follows. Catalyzes the last two sequential reactions in the de novo biosynthetic pathway for UDP-N-acetylglucosamine (UDP-GlcNAc). The C-terminal domain catalyzes the transfer of acetyl group from acetyl coenzyme A to glucosamine-1-phosphate (GlcN-1-P) to produce N-acetylglucosamine-1-phosphate (GlcNAc-1-P), which is converted into UDP-GlcNAc by the transfer of uridine 5-monophosphate (from uridine 5-triphosphate), a reaction catalyzed by the N-terminal domain. The sequence is that of Bifunctional protein GlmU from Nostoc sp. (strain PCC 7120 / SAG 25.82 / UTEX 2576).